The sequence spans 563 residues: 2-isopropylmalate synthase (563 aa).

The 275-residue stretch at 31-305 folds into the Pyruvate carboxyltransferase domain; the sequence is PIWMSTDLRD…DPGLDFAQIN (275 aa). Mg(2+)-binding residues include aspartate 40, histidine 244, histidine 246, and asparagine 280. A regulatory domain region spans residues 437 to 563; it reads RAEPIEYLSH…EWARLCGGAE (127 aa).

The protein belongs to the alpha-IPM synthase/homocitrate synthase family. LeuA type 2 subfamily. Homodimer. Requires Mg(2+) as cofactor.

It localises to the cytoplasm. The catalysed reaction is 3-methyl-2-oxobutanoate + acetyl-CoA + H2O = (2S)-2-isopropylmalate + CoA + H(+). The protein operates within amino-acid biosynthesis; L-leucine biosynthesis; L-leucine from 3-methyl-2-oxobutanoate: step 1/4. In terms of biological role, catalyzes the condensation of the acetyl group of acetyl-CoA with 3-methyl-2-oxobutanoate (2-ketoisovalerate) to form 3-carboxy-3-hydroxy-4-methylpentanoate (2-isopropylmalate). The chain is 2-isopropylmalate synthase from Parvibaculum lavamentivorans (strain DS-1 / DSM 13023 / NCIMB 13966).